A 237-amino-acid chain; its full sequence is UPF0280 protein Mthe_1297 (237 aa).

This sequence belongs to the UPF0280 family.

The sequence is that of UPF0280 protein Mthe_1297 from Methanothrix thermoacetophila (strain DSM 6194 / JCM 14653 / NBRC 101360 / PT) (Methanosaeta thermophila).